The primary structure comprises 840 residues: Homeobox-leucine zipper protein HOX9 (840 aa).

Disordered stretches follow at residues 1 to 26 (MAAAVAMRSGSGSDGGGGGYDKAGMD) and 135 to 160 (NPSLGNDTSCESNVTTPQNPLRDASN). Gly residues predominate over residues 12–21 (GSDGGGGGYD). The homeobox DNA-binding region spans 26-89 (DSGKYVRYTP…NRRCRDKQRK (64 aa)). Residues 86-135 (KQRKEASRLQAVNRKLTAMNKLLMEENERLQKQVSQLVHENAYMKQQLQN) are a coiled coil. An START domain is found at 157-385 (DASNPSGLLT…IAQETSGEVV (229 aa)).

Belongs to the HD-ZIP homeobox family. Class III subfamily. In terms of tissue distribution, expressed in seedlings, roots, stems, leaf sheaths and blades and panicles.

The protein localises to the nucleus. Functionally, probable transcription factor. The chain is Homeobox-leucine zipper protein HOX9 (HOX9) from Oryza sativa subsp. japonica (Rice).